A 1342-amino-acid chain; its full sequence is DNA-directed RNA polymerase subunit beta (1342 aa).

The protein belongs to the RNA polymerase beta chain family. The RNAP catalytic core consists of 2 alpha, 1 beta, 1 beta' and 1 omega subunit. When a sigma factor is associated with the core the holoenzyme is formed, which can initiate transcription.

It catalyses the reaction RNA(n) + a ribonucleoside 5'-triphosphate = RNA(n+1) + diphosphate. DNA-dependent RNA polymerase catalyzes the transcription of DNA into RNA using the four ribonucleoside triphosphates as substrates. The chain is DNA-directed RNA polymerase subunit beta from Serratia proteamaculans (strain 568).